We begin with the raw amino-acid sequence, 464 residues long: 3-isopropylmalate dehydratase large subunit (464 aa).

[4Fe-4S] cluster contacts are provided by Cys337, Cys397, and Cys400.

It belongs to the aconitase/IPM isomerase family. LeuC type 1 subfamily. Heterodimer of LeuC and LeuD. [4Fe-4S] cluster serves as cofactor.

The catalysed reaction is (2R,3S)-3-isopropylmalate = (2S)-2-isopropylmalate. It participates in amino-acid biosynthesis; L-leucine biosynthesis; L-leucine from 3-methyl-2-oxobutanoate: step 2/4. Functionally, catalyzes the isomerization between 2-isopropylmalate and 3-isopropylmalate, via the formation of 2-isopropylmaleate. In Bacillus cereus (strain G9842), this protein is 3-isopropylmalate dehydratase large subunit.